A 459-amino-acid polypeptide reads, in one-letter code: Cysteine--tRNA ligase (459 aa).

Cysteine 29 contributes to the Zn(2+) binding site. The 'HIGH' region signature appears at 31-41 (MTVYDLCHLGH). Zn(2+)-binding residues include cysteine 213, histidine 238, and glutamate 242. The 'KMSKS' region motif lies at 270–274 (KMSKS). Lysine 273 is an ATP binding site.

The protein belongs to the class-I aminoacyl-tRNA synthetase family. As to quaternary structure, monomer. Zn(2+) serves as cofactor.

It localises to the cytoplasm. The enzyme catalyses tRNA(Cys) + L-cysteine + ATP = L-cysteinyl-tRNA(Cys) + AMP + diphosphate. The polypeptide is Cysteine--tRNA ligase (Variovorax paradoxus (strain S110)).